A 295-amino-acid polypeptide reads, in one-letter code: NAD kinase (295 aa).

D74 acts as the Proton acceptor in catalysis. Residues 74–75, 148–149, H159, R176, D178, and 189–194 each bind NAD(+); these read DG, ND, and TAYALS.

This sequence belongs to the NAD kinase family. The cofactor is a divalent metal cation.

Its subcellular location is the cytoplasm. The catalysed reaction is NAD(+) + ATP = ADP + NADP(+) + H(+). Its function is as follows. Involved in the regulation of the intracellular balance of NAD and NADP, and is a key enzyme in the biosynthesis of NADP. Catalyzes specifically the phosphorylation on 2'-hydroxyl of the adenosine moiety of NAD to yield NADP. The chain is NAD kinase from Legionella pneumophila (strain Corby).